The following is a 433-amino-acid chain: Phosphomethylpyrimidine synthase 1 (433 aa).

Substrate is bound by residues Asn-66, Met-94, Tyr-123, His-162, Ser-184–Gly-186, Asp-225–Arg-228, and Glu-264. His-268 is a binding site for Zn(2+). Tyr-291 provides a ligand contact to substrate. His-332 contacts Zn(2+). Residues Cys-408, Cys-411, and Cys-415 each coordinate [4Fe-4S] cluster.

This sequence belongs to the ThiC family. Requires [4Fe-4S] cluster as cofactor.

The catalysed reaction is 5-amino-1-(5-phospho-beta-D-ribosyl)imidazole + S-adenosyl-L-methionine = 4-amino-2-methyl-5-(phosphooxymethyl)pyrimidine + CO + 5'-deoxyadenosine + formate + L-methionine + 3 H(+). The protein operates within cofactor biosynthesis; thiamine diphosphate biosynthesis. Catalyzes the synthesis of the hydroxymethylpyrimidine phosphate (HMP-P) moiety of thiamine from aminoimidazole ribotide (AIR) in a radical S-adenosyl-L-methionine (SAM)-dependent reaction. This is Phosphomethylpyrimidine synthase 1 from Saccharolobus solfataricus (strain ATCC 35092 / DSM 1617 / JCM 11322 / P2) (Sulfolobus solfataricus).